Reading from the N-terminus, the 116-residue chain is Large ribosomal subunit protein bL19 (116 aa).

The protein belongs to the bacterial ribosomal protein bL19 family.

This protein is located at the 30S-50S ribosomal subunit interface and may play a role in the structure and function of the aminoacyl-tRNA binding site. This Streptomyces avermitilis (strain ATCC 31267 / DSM 46492 / JCM 5070 / NBRC 14893 / NCIMB 12804 / NRRL 8165 / MA-4680) protein is Large ribosomal subunit protein bL19.